Consider the following 645-residue polypeptide: Pro-neuregulin-1, membrane-bound isoform (645 aa).

A propeptide spanning residues 1 to 19 (MSERKEGRGKGKGKKKDRG) is cleaved from the precursor. Positions 1 to 52 (MSERKEGRGKGKGKKKDRGSRGKPAPAEGDPSPALPPRLKEMKSQESAAGSK) are disordered. Over 20–247 (SRGKPAPAEG…MEAEELYQKR (228 aa)) the chain is Extracellular. In terms of domain architecture, Ig-like C2-type spans 37–128 (PRLKEMKSQE…GNDSASANIT (92 aa)). Residues C57 and C112 are joined by a disulfide bond. A compositionally biased stretch (polar residues) spans 139–164 (MSASTERPYVSSESPIRISVSTEGAN). A disordered region spans residues 139-175 (MSASTERPYVSSESPIRISVSTEGANTSSSTSTSTTG). Residues 165-175 (TSSSTSTSTTG) are compositionally biased toward low complexity. One can recognise an EGF-like domain in the interval 178–222 (HLIKCAEKEKTFCVNGGECFMVKDLSNPSRYLCKCPNEFTGDRCQ). Cystine bridges form between C182–C196, C190–C210, and C212–C221. A helical membrane pass occupies residues 248 to 268 (VLTITGICIALLVVGIMCVVA). Over 269 to 645 (YCKTKKQRQK…VIANQDPIAV (377 aa)) the chain is Cytoplasmic. The segment covering 340–355 (SHYTSTAHHSTTVTQT) has biased composition (low complexity). 4 disordered regions span residues 340–364 (SHYTSTAHHSTTVTQTPSHSWSNGH), 380–406 (SVENSRHSSPAGGPRGRLHGLGGPREC), 433–463 (MTTPARMSPVDFHTPSSPKSPPSEMSPPVSS), and 531–593 (ETTQ…DTPF). Positions 392–402 (GPRGRLHGLGG) are enriched in gly residues. Residues 547 to 557 (TNSRRAKRTKP) show a composition bias toward basic residues. Residues 568 to 579 (DSNPSSVSSNSE) are compositionally biased toward low complexity.

The protein belongs to the neuregulin family. In terms of assembly, the cytoplasmic domain interacts with the LIM domain region of LIMK1. Forms a ternary complex with ERBB3 and ITGAV:ITGB3 or ITGA6:ITGB4. Interacts with NRDC and BACE1. Post-translationally, proteolytic cleavage close to the plasma membrane on the external face leads to the release of the soluble growth factor form. N- and O-glycosylated. Extensive glycosylation precedes the proteolytic cleavage.

It localises to the cell membrane. It is found in the secreted. In terms of biological role, direct ligand for ERBB3 and ERBB4 tyrosine kinase receptors. Concomitantly recruits ERBB1 and ERBB2 coreceptors, resulting in ligand-stimulated tyrosine phosphorylation and activation of the ERBB receptors. Perform diverse functions such as inducing growth and differentiation of epithelial, glial, neuronal, and skeletal muscle cells; inducing expression of acetylcholine receptor in synaptic vesicles during the formation of the neuromuscular junction; stimulating lobuloalveolar budding and milk production in the mammary gland and inducing differentiation of mammary tumor cells; stimulating Schwann cell proliferation; implication in the development of the myocardium such as trabeculation of the developing heart. Binds to ERBB4 and ERBB3. Acts as a ligand for integrins and binds (via EGF domain) to integrins ITGAV:ITGB3 or ITGA6:ITGB4. Its binding to integrins and subsequent ternary complex formation with integrins and ERRB3 are essential for NRG1-ERBB signaling. Induces the phosphorylation and activation of MAPK3/ERK1, MAPK1/ERK2 and AKT1, and ligand-dependent ERBB4 endocytosis is essential for the NRG1-mediated activation of these kinases in neurons. The chain is Pro-neuregulin-1, membrane-bound isoform from Mus musculus (Mouse).